The following is a 560-amino-acid chain: Membrane protein insertase YidC (560 aa).

6 helical membrane passes run 5–25, 334–354, 357–377, 431–451, 476–496, and 522–542; these read IINL…WQYF, AIDF…MNFF, YVGN…LLMF, LPIL…YVTI, LFGL…WPIL, and FMPL…LIYW.

This sequence belongs to the OXA1/ALB3/YidC family. Type 1 subfamily. In terms of assembly, interacts with the Sec translocase complex via SecD. Specifically interacts with transmembrane segments of nascent integral membrane proteins during membrane integration.

It is found in the cell inner membrane. Functionally, required for the insertion and/or proper folding and/or complex formation of integral membrane proteins into the membrane. Involved in integration of membrane proteins that insert both dependently and independently of the Sec translocase complex, as well as at least some lipoproteins. Aids folding of multispanning membrane proteins. This is Membrane protein insertase YidC from Rickettsia rickettsii (strain Sheila Smith).